The following is a 506-amino-acid chain: Maturase K (506 aa).

Belongs to the intron maturase 2 family. MatK subfamily.

The protein localises to the plastid. It is found in the chloroplast. Its function is as follows. Usually encoded in the trnK tRNA gene intron. Probably assists in splicing its own and other chloroplast group II introns. The protein is Maturase K of Artanema fimbriatum.